A 451-amino-acid chain; its full sequence is MTSNDTIAAIATPPGRGGIGIVRISGTNLESLARGILGKLPDPRHAGLFSFLDQNSQIIDQGIALYFPSPHSYTGEEVLELQGHGGPAVMNLLLDRCLQLGARLAEPGEFTLRAFLNDKLDLAQAEGVADLIAASTANAARCAVRSLHGEFSSTIHQLVSALIDLRVLVEATLDFPEEEIDFLQSAHAAEQLATIRAKLEQVLVASRQGNLLQEGIKVVLAGQPNVGKSSLLNRLAGDEVAIVTDIPGTTRDTVRQSIEIEGIPLHLIDTAGLRETSDIVEQHGIARTYAAIEQADLVLLLVDSRHGVTEEDRSVLTRLPERLPVLTVHNKIDLSAQPPRLEENTSGPTIYLSAINGEGIELLRAALLKTAGWQANIAGEGAYMARQRHLQALIQAKELLERAAAWLHRADQLEILAEELRLAQQALSSITGEFTSDDLLGEIFSSFCIGK.

Residues R23, E80, and K119 each coordinate (6S)-5-formyl-5,6,7,8-tetrahydrofolate. The region spanning 215 to 372 (GIKVVLAGQP…LRAALLKTAG (158 aa)) is the TrmE-type G domain. Position 225 (N225) interacts with K(+). GTP contacts are provided by residues 225–230 (NVGKSS), 244–250 (TDIPGTT), and 269–272 (DTAG). Residue S229 coordinates Mg(2+). Residues T244, I246, and T249 each contribute to the K(+) site. T250 contacts Mg(2+). Position 451 (K451) interacts with (6S)-5-formyl-5,6,7,8-tetrahydrofolate.

The protein belongs to the TRAFAC class TrmE-Era-EngA-EngB-Septin-like GTPase superfamily. TrmE GTPase family. Homodimer. Heterotetramer of two MnmE and two MnmG subunits. K(+) is required as a cofactor.

It localises to the cytoplasm. Functionally, exhibits a very high intrinsic GTPase hydrolysis rate. Involved in the addition of a carboxymethylaminomethyl (cmnm) group at the wobble position (U34) of certain tRNAs, forming tRNA-cmnm(5)s(2)U34. This Nitrosomonas europaea (strain ATCC 19718 / CIP 103999 / KCTC 2705 / NBRC 14298) protein is tRNA modification GTPase MnmE.